The primary structure comprises 863 residues: uncharacterized protein (863 aa).

Residues 1–29 (MHQSGSVSLCRSAISVLVATALYSPIALA) form the signal peptide. In terms of domain architecture, Autotransporter spans 595–863 (GVSYDTAMWS…NTQAGVVWTF (269 aa)).

The protein resides in the cell outer membrane. This is an uncharacterized protein from Escherichia coli (strain K12).